Reading from the N-terminus, the 291-residue chain is 3-hydroxy-5-phosphonooxypentane-2,4-dione thiolase (291 aa).

Catalysis depends on Lys203, which acts as the Schiff-base intermediate with substrate.

It belongs to the DeoC/FbaB aldolase family. In terms of assembly, homodecamer.

It localises to the cytoplasm. It catalyses the reaction dihydroxyacetone phosphate + acetyl-CoA = 3-hydroxy-2,4-dioxopentyl phosphate + CoA. Functionally, involved in the degradation of phospho-AI-2, thereby terminating induction of the lsr operon and closing the AI-2 signaling cycle. Catalyzes the transfer of an acetyl moiety from 3-hydroxy-5-phosphonooxypentane-2,4-dione to CoA to form glycerone phosphate and acetyl-CoA. The sequence is that of 3-hydroxy-5-phosphonooxypentane-2,4-dione thiolase from Yersinia pestis bv. Antiqua (strain Antiqua).